We begin with the raw amino-acid sequence, 277 residues long: Ribosomal RNA small subunit methyltransferase A (277 aa).

Residues asparagine 23, leucine 25, glycine 50, glutamate 75, aspartate 98, and asparagine 121 each contribute to the S-adenosyl-L-methionine site.

This sequence belongs to the class I-like SAM-binding methyltransferase superfamily. rRNA adenine N(6)-methyltransferase family. RsmA subfamily.

Its subcellular location is the cytoplasm. It catalyses the reaction adenosine(1518)/adenosine(1519) in 16S rRNA + 4 S-adenosyl-L-methionine = N(6)-dimethyladenosine(1518)/N(6)-dimethyladenosine(1519) in 16S rRNA + 4 S-adenosyl-L-homocysteine + 4 H(+). In terms of biological role, specifically dimethylates two adjacent adenosines (A1518 and A1519) in the loop of a conserved hairpin near the 3'-end of 16S rRNA in the 30S particle. May play a critical role in biogenesis of 30S subunits. This chain is Ribosomal RNA small subunit methyltransferase A, found in Paraburkholderia xenovorans (strain LB400).